The primary structure comprises 374 residues: N-acetyldiaminopimelate deacetylase (374 aa).

Residue D69 is part of the active site. E128 serves as the catalytic Proton acceptor.

The protein belongs to the peptidase M20A family. N-acetyldiaminopimelate deacetylase subfamily.

It carries out the reaction N-acetyl-(2S,6S)-2,6-diaminopimelate + H2O = (2S,6S)-2,6-diaminopimelate + acetate. It functions in the pathway amino-acid biosynthesis; L-lysine biosynthesis via DAP pathway; LL-2,6-diaminopimelate from (S)-tetrahydrodipicolinate (acetylase route): step 3/3. Catalyzes the conversion of N-acetyl-diaminopimelate to diaminopimelate and acetate. The polypeptide is N-acetyldiaminopimelate deacetylase (Bacillus velezensis (strain DSM 23117 / BGSC 10A6 / LMG 26770 / FZB42) (Bacillus amyloliquefaciens subsp. plantarum)).